A 177-amino-acid chain; its full sequence is CDP-diacylglycerol--serine O-phosphatidyltransferase (177 aa).

5 helical membrane passes run 4-24 (IPCMITIGNFICGLLAIHSLL), 28-48 (IHSAVLFIFTGMFLDFFDGMA), 77-97 (MLAYSVALYTLPFIGILCALT), 116-136 (LPTFIGMPIPFAGMCLVILSF), and 140-160 (PILLAIGTCGLSYLMVSKIKF).

Belongs to the CDP-alcohol phosphatidyltransferase class-I family.

Its subcellular location is the cell membrane. It carries out the reaction a CDP-1,2-diacyl-sn-glycerol + L-serine = a 1,2-diacyl-sn-glycero-3-phospho-L-serine + CMP + H(+). This is CDP-diacylglycerol--serine O-phosphatidyltransferase (pssA) from Bacillus subtilis (strain 168).